Here is a 336-residue protein sequence, read N- to C-terminus: GTPase Obg (336 aa).

One can recognise an Obg domain in the interval 1-159 (MKFVDEATLI…KTLKLELKLL (159 aa)). One can recognise an OBG-type G domain in the interval 160–329 (ADVGLVGLPN…LIEAIFAQLR (170 aa)). GTP is bound by residues 166–173 (GLPNAGKS), 191–195 (FTTLA), 213–216 (DIPG), 283–286 (NKMD), and 310–312 (SAI). The Mg(2+) site is built by Ser173 and Thr193.

It belongs to the TRAFAC class OBG-HflX-like GTPase superfamily. OBG GTPase family. In terms of assembly, monomer. Mg(2+) serves as cofactor.

Its subcellular location is the cytoplasm. Its function is as follows. An essential GTPase which binds GTP, GDP and possibly (p)ppGpp with moderate affinity, with high nucleotide exchange rates and a fairly low GTP hydrolysis rate. Plays a role in control of the cell cycle, stress response, ribosome biogenesis and in those bacteria that undergo differentiation, in morphogenesis control. In Desulfatibacillum aliphaticivorans, this protein is GTPase Obg.